The chain runs to 217 residues: Small ribosomal subunit protein uS3 (217 aa).

A KH type-2 domain is found at 40–110 (IRELVNKSFT…EVYINIHEVR (71 aa)).

It belongs to the universal ribosomal protein uS3 family. As to quaternary structure, part of the 30S ribosomal subunit. Forms a tight complex with proteins S10 and S14.

Functionally, binds the lower part of the 30S subunit head. Binds mRNA in the 70S ribosome, positioning it for translation. The polypeptide is Small ribosomal subunit protein uS3 (Rickettsia bellii (strain OSU 85-389)).